The chain runs to 478 residues: Catalase (478 aa).

The disordered stretch occupies residues 1–23; it reads MTNQLTTNEGQPWADNQHSQTAG. Active-site residues include histidine 53 and asparagine 126. Position 336 (tyrosine 336) interacts with heme.

The protein belongs to the catalase family. Requires heme as cofactor.

The protein resides in the cytoplasm. It catalyses the reaction 2 H2O2 = O2 + 2 H2O. Functionally, decomposes hydrogen peroxide into water and oxygen; serves to protect cells from the toxic effects of hydrogen peroxide. The chain is Catalase (katA) from Latilactobacillus sakei (Lactobacillus sakei).